The following is a 536-amino-acid chain: Octopamine receptor beta-2R (536 aa).

The disordered stretch occupies residues Met-1–Arg-26. Residues Met-1–Ala-157 lie on the Extracellular side of the membrane. Positions Gln-14–Arg-26 are enriched in basic residues. N-linked (GlcNAc...) asparagine glycans are attached at residues Asn-18, Asn-92, Asn-113, and Asn-126. The chain crosses the membrane as a helical span at residues Phe-158–Val-178. The Cytoplasmic segment spans residues Met-179–Tyr-190. A helical transmembrane segment spans residues Phe-191–Phe-211. Topologically, residues Ser-212–Asp-233 are extracellular. Residues Val-234–Val-256 traverse the membrane as a helical segment. The Cytoplasmic portion of the chain corresponds to Lys-257–Val-270. A helical membrane pass occupies residues Gly-271–Ile-291. The Extracellular portion of the chain corresponds to Gly-292–Val-320. A helical transmembrane segment spans residues Ile-321–Ile-341. Residues Phe-342 to Thr-412 are Cytoplasmic-facing. Residues Leu-413 to Leu-433 form a helical membrane-spanning segment. At Ser-434 to Asp-444 the chain is on the extracellular side. The chain crosses the membrane as a helical span at residues Ile-445–Tyr-465. Residues Ala-466 to Leu-536 are Cytoplasmic-facing.

This sequence belongs to the G-protein coupled receptor 1 family. In terms of tissue distribution, in the adult, expressed in the superior protocerebrum and the optic lobe medulla of the central nervous system, nurse cells of egg chambers in the ovary at oogenic stages 1-10, and spermatogonia and spermatocytes in the testis. Expressed in the oviduct epithelium. Also expressed in the spermatheca. Expressed in embryonic and larval ventral nerve cord and brain lobe, embryonic and larval salivary glands and larval imaginal disk and midgut. Also expressed in larval synaptic boutons.

It is found in the cell membrane. In terms of biological role, autoreceptor for octopamine (OA), which is a neurotransmitter, neurohormone, and neuromodulator in invertebrates. Essential for ovulation and fertilization. During ovulation it mediates the OA-induced relaxation of the oviduct visceral muscles, by increasing cAMP levels and activating effectors such as calmodulin-dependent kinase II (CaMKII) and cAMP-dependent protein kinase A (PKA) pathways. Positively regulates synaptic growth; an action that is antagonized by Octbeta1R. The chain is Octopamine receptor beta-2R from Drosophila melanogaster (Fruit fly).